The sequence spans 125 residues: Mesotocin-neurophysin MT (125 aa).

The signal sequence occupies residues 1-19; the sequence is MSYTALAVTFFGWLALSSA. A disulfide bond links Cys20 and Cys25. Gly28 is modified (glycine amide). 7 disulfide bridges follow: Cys42-Cys86, Cys45-Cys59, Cys53-Cys76, Cys60-Cys66, Cys93-Cys106, Cys100-Cys118, and Cys107-Cys112.

It belongs to the vasopressin/oxytocin family. Mesotocin is produced by magnocellular preoptic neurons in the hypothalamus in amphibians, reptiles and birds.

The protein localises to the secreted. In terms of biological role, mesotocin is a diuretic hormone. The protein is Mesotocin-neurophysin MT of Bufo japonicus (Japanese common toad).